A 768-amino-acid chain; its full sequence is Lon protease (768 aa).

The region spanning 4–198 (APFLPIRDLV…RILDEIVAEM (195 aa)) is the Lon N-terminal domain. 349–356 (GPPGIGKT) provides a ligand contact to ATP. The 183-residue stretch at 586–768 (TGKIGVVNGL…DDVSKLVFVK (183 aa)) folds into the Lon proteolytic domain. Catalysis depends on residues Ser674 and Lys717.

It belongs to the peptidase S16 family. As to quaternary structure, homohexamer. Organized in a ring with a central cavity.

It is found in the cytoplasm. It carries out the reaction Hydrolysis of proteins in presence of ATP.. ATP-dependent serine protease that mediates the selective degradation of mutant and abnormal proteins as well as certain short-lived regulatory proteins. Required for cellular homeostasis and for survival from DNA damage and developmental changes induced by stress. Degrades polypeptides processively to yield small peptide fragments that are 5 to 10 amino acids long. Binds to DNA in a double-stranded, site-specific manner. In Fusobacterium nucleatum subsp. nucleatum (strain ATCC 25586 / DSM 15643 / BCRC 10681 / CIP 101130 / JCM 8532 / KCTC 2640 / LMG 13131 / VPI 4355), this protein is Lon protease.